A 914-amino-acid polypeptide reads, in one-letter code: Translation initiation factor IF-2 (914 aa).

2 disordered regions span residues Gly52–Pro84 and Ala98–Leu326. Residues Ala57 to Ala68 show a composition bias toward low complexity. Over residues Ala69–Pro84 the composition is skewed to basic and acidic residues. The segment covering Ala98–Ser138 has biased composition (low complexity). Pro residues-rich tracts occupy residues Ala139–Lys169 and Pro193–Pro207. A compositionally biased stretch (gly residues) spans Arg236–Gly296. Residues Arg300–Lys309 show a composition bias toward basic residues. The 161-residue stretch at Thr421 to Leu581 folds into the tr-type G domain. GTP-binding positions include Gly430–Thr437, Asp469–His473, and Asn523–Asp526.

It belongs to the TRAFAC class translation factor GTPase superfamily. Classic translation factor GTPase family. IF-2 subfamily.

The protein resides in the cytoplasm. One of the essential components for the initiation of protein synthesis. Protects formylmethionyl-tRNA from spontaneous hydrolysis and promotes its binding to the 30S ribosomal subunits. Also involved in the hydrolysis of GTP during the formation of the 70S ribosomal complex. The protein is Translation initiation factor IF-2 of Mycobacterium avium (strain 104).